Consider the following 416-residue polypeptide: MNKQSWLLNLSLLKTHPAFRAVFLARFISIVSLGLLGVAVPVQIQMMTHSTWLVGLSVTLTGGAMFVGLMVGGVLADRYERKKVILLARGTCGIGFIGLCLNALLPEPSLLAIYLLGLWDGFFASLGVTALLAATPALVGRENLMQAGAITMLTVRLGSVISPMIGGLLLATGGVAWNYGLAAAGTFITLLPLLSLPALPPPPQPREHPLKSLLAGFRFLLASPLVGGIALLGGLLTMASAVRVLYPALADNWQMSAAEIGFLYAAIPLGAAIGALTSGKLAHSARPGLLMLLSTLGSFLAIGLFGLMPMWILGVVCLALFGWLSAVSSLLQYTMLQTQTPEAMLGRINGLWTAQNVTGDAIGAALLGGLGAMMTPVASASASGFGLLIIGVLLLLVLVELRRFRQTPPQVTASDS.

Topologically, residues 1-21 (MNKQSWLLNLSLLKTHPAFRA) are cytoplasmic. A helical membrane pass occupies residues 22-42 (VFLARFISIVSLGLLGVAVPV). The Periplasmic segment spans residues 43–55 (QIQMMTHSTWLVG). The chain crosses the membrane as a helical span at residues 56–76 (LSVTLTGGAMFVGLMVGGVLA). Over 77-83 (DRYERKK) the chain is Cytoplasmic. Residues 84 to 104 (VILLARGTCGIGFIGLCLNAL) form a helical membrane-spanning segment. The Periplasmic segment spans residues 105–109 (LPEPS). The helical transmembrane segment at 110 to 130 (LLAIYLLGLWDGFFASLGVTA) threads the bilayer. Residues 131-156 (LLAATPALVGRENLMQAGAITMLTVR) are Cytoplasmic-facing. Residues 157 to 177 (LGSVISPMIGGLLLATGGVAW) traverse the membrane as a helical segment. Residue N178 is a topological domain, periplasmic. Residues 179-199 (YGLAAAGTFITLLPLLSLPAL) form a helical membrane-spanning segment. The Cytoplasmic segment spans residues 200–218 (PPPPQPREHPLKSLLAGFR). The chain crosses the membrane as a helical span at residues 219-239 (FLLASPLVGGIALLGGLLTMA). At 240–256 (SAVRVLYPALADNWQMS) the chain is on the periplasmic side. A helical membrane pass occupies residues 257-277 (AAEIGFLYAAIPLGAAIGALT). Residues 278 to 287 (SGKLAHSARP) are Cytoplasmic-facing. The chain crosses the membrane as a helical span at residues 288 to 307 (GLLMLLSTLGSFLAIGLFGL). Over 308–313 (MPMWIL) the chain is Periplasmic. The chain crosses the membrane as a helical span at residues 314–336 (GVVCLALFGWLSAVSSLLQYTML). At 337–356 (QTQTPEAMLGRINGLWTAQN) the chain is on the cytoplasmic side. Residues 357–377 (VTGDAIGAALLGGLGAMMTPV) traverse the membrane as a helical segment. Position 378 (A378) is a topological domain, periplasmic. The chain crosses the membrane as a helical span at residues 379–399 (SASASGFGLLIIGVLLLLVLV). The Cytoplasmic portion of the chain corresponds to 400–416 (ELRRFRQTPPQVTASDS).

It belongs to the major facilitator superfamily. EntS (TC 2.A.1.38) family.

It localises to the cell inner membrane. Its function is as follows. Component of an export pathway for enterobactin. This is Enterobactin exporter EntS from Shigella boydii serotype 4 (strain Sb227).